The sequence spans 512 residues: NAD-dependent deacetylase sir2A (512 aa).

The UBP-type zinc finger occupies Ile-7 to Asn-110. Zn(2+)-binding residues include Cys-9, His-11, Cys-34, Cys-37, Cys-46, Cys-49, Cys-54, His-61, His-65, His-71, Cys-84, and Cys-87. The segment covering Asp-113 to Lys-122 has biased composition (basic and acidic residues). The disordered stretch occupies residues Asp-113–Ser-196. Positions Val-130–Asn-175 are enriched in low complexity. Acidic residues predominate over residues Asn-176–Glu-195. The 273-residue stretch at Cys-231 to Glu-503 folds into the Deacetylase sirtuin-type domain. Catalysis depends on His-361, which acts as the Proton acceptor. Residues Cys-369, Cys-372, Cys-393, and Cys-399 each coordinate Zn(2+).

Belongs to the sirtuin family. The cofactor is Zn(2+).

It catalyses the reaction N(6)-acetyl-L-lysyl-[protein] + NAD(+) + H2O = 2''-O-acetyl-ADP-D-ribose + nicotinamide + L-lysyl-[protein]. In terms of biological role, NAD-dependent deacetylase, which plays an important role in the regulation of transcriptional repression. In Dictyostelium discoideum (Social amoeba), this protein is NAD-dependent deacetylase sir2A (sir2A).